The following is a 442-amino-acid chain: Thymidine phosphorylase (442 aa).

Belongs to the thymidine/pyrimidine-nucleoside phosphorylase family. In terms of assembly, homodimer.

It catalyses the reaction thymidine + phosphate = 2-deoxy-alpha-D-ribose 1-phosphate + thymine. It participates in pyrimidine metabolism; dTMP biosynthesis via salvage pathway; dTMP from thymine: step 1/2. In terms of biological role, the enzymes which catalyze the reversible phosphorolysis of pyrimidine nucleosides are involved in the degradation of these compounds and in their utilization as carbon and energy sources, or in the rescue of pyrimidine bases for nucleotide synthesis. In Pectobacterium atrosepticum (strain SCRI 1043 / ATCC BAA-672) (Erwinia carotovora subsp. atroseptica), this protein is Thymidine phosphorylase.